A 304-amino-acid polypeptide reads, in one-letter code: Dihydroorotate dehydrogenase B (NAD(+)), catalytic subunit (304 aa).

Residues serine 22 and 46–47 contribute to the FMN site; that span reads KG. Residues lysine 46 and 70 to 74 each bind substrate; that span reads NAIGL. Positions 100 and 128 each coordinate FMN. Asparagine 128 is a substrate binding site. The active-site Nucleophile is cysteine 131. Residues lysine 166 and isoleucine 192 each contribute to the FMN site. 193 to 194 is a binding site for substrate; that stretch reads NT. FMN is bound by residues glycine 218, 244–245, and 266–267; these read GG and GT.

It belongs to the dihydroorotate dehydrogenase family. Type 1 subfamily. In terms of assembly, heterotetramer of 2 PyrK and 2 PyrD type B subunits. FMN serves as cofactor.

The protein resides in the cytoplasm. It catalyses the reaction (S)-dihydroorotate + NAD(+) = orotate + NADH + H(+). It functions in the pathway pyrimidine metabolism; UMP biosynthesis via de novo pathway; orotate from (S)-dihydroorotate (NAD(+) route): step 1/1. Its function is as follows. Catalyzes the conversion of dihydroorotate to orotate with NAD(+) as electron acceptor. The sequence is that of Dihydroorotate dehydrogenase B (NAD(+)), catalytic subunit (pyrD) from Trichlorobacter lovleyi (strain ATCC BAA-1151 / DSM 17278 / SZ) (Geobacter lovleyi).